A 751-amino-acid chain; its full sequence is Cytosolic neutral trehalase (751 aa).

Positions 1 to 10 are enriched in polar residues; sequence MSQVNTSQGP. The disordered stretch occupies residues 1-59; it reads MSQVNTSQGPVAQGRQRRLSSLSEFNDPFSNAEVYYGPPTDPRKQKQAKPAKINRTRTM. N-acetylserine is present on serine 2. Phosphoserine; by PKA is present on residues serine 20 and serine 21. Serine 23 carries the post-translational modification Phosphoserine. Residues 45-55 show a composition bias toward basic residues; the sequence is QKQAKPAKINR. The residue at position 58 (threonine 58) is a Phosphothreonine. Residue serine 60 is modified to Phosphoserine; by PKA. Position 66 is a phosphoserine (serine 66). Residues 73 to 92 are disordered; sequence FGKLQQTRRGSEDDTYSSSQ. At serine 83 the chain carries Phosphoserine; by PKA. Positions 114, 116, 118, 120, and 125 each coordinate Ca(2+). Substrate is bound by residues arginine 302, 309 to 310, asparagine 346, 355 to 357, glutamate 424, arginine 473, and glycine 476; these read WD and RSQ. Residues aspartate 478 and glutamate 674 each act as proton donor/acceptor in the active site.

This sequence belongs to the glycosyl hydrolase 37 family. As to quaternary structure, monomer. Interacts with BMH1 dimers; the interaction is direct and activates NTH1. Interacts with BMH2. Requires Ca(2+) as cofactor. Post-translationally, phosphorylated by protein kinase A (PKA); phosphorylation at Ser-60 and Ser-83 is required for activation by the 14-3-3 proteins BMH1 and BMH2.

The protein resides in the cytoplasm. The catalysed reaction is alpha,alpha-trehalose + H2O = alpha-D-glucose + beta-D-glucose. The protein operates within carbohydrate degradation. Activated by calcium. Activated by protein kinase A (PKA)-mediated phosphorylation. Hydrolyzes intracellular trehalose to glucose. The disaccharide trehalose serves as a storage carbohydrate that is mobilized during nutrient stress. Regulates the level of trehalose as a protectant for cell integrity during heat stress. This is Cytosolic neutral trehalase from Saccharomyces cerevisiae (strain ATCC 204508 / S288c) (Baker's yeast).